Reading from the N-terminus, the 61-residue chain is Large ribosomal subunit protein uL30 (61 aa).

It belongs to the universal ribosomal protein uL30 family. As to quaternary structure, part of the 50S ribosomal subunit.

The protein is Large ribosomal subunit protein uL30 of Treponema pallidum subsp. pallidum (strain SS14).